The sequence spans 540 residues: Probable pectinesterase/pectinesterase inhibitor 60 (540 aa).

The N-terminal stretch at Met-1–Ala-31 is a signal peptide. The pectinesterase inhibitor 60 stretch occupies residues Asp-32 to Val-185. N-linked (GlcNAc...) asparagine glycosylation is found at Asn-34, Asn-91, Asn-95, Asn-120, Asn-161, and Asn-195. Residues Asn-225 to Thr-526 form a pectinesterase 60 region. The substrate site is built by Thr-302 and Gln-332. The Proton donor; for pectinesterase activity role is filled by Asp-355. Cys-369 and Cys-389 form a disulfide bridge. Catalysis depends on Asp-376, which acts as the Nucleophile; for pectinesterase activity. Substrate contacts are provided by Arg-444 and Trp-446.

The protein in the N-terminal section; belongs to the PMEI family. It in the C-terminal section; belongs to the pectinesterase family. In terms of tissue distribution, expressed in siliques.

The protein resides in the secreted. The protein localises to the cell wall. It catalyses the reaction [(1-&gt;4)-alpha-D-galacturonosyl methyl ester](n) + n H2O = [(1-&gt;4)-alpha-D-galacturonosyl](n) + n methanol + n H(+). The protein operates within glycan metabolism; pectin degradation; 2-dehydro-3-deoxy-D-gluconate from pectin: step 1/5. In terms of biological role, acts in the modification of cell walls via demethylesterification of cell wall pectin. The protein is Probable pectinesterase/pectinesterase inhibitor 60 (PME60) of Arabidopsis thaliana (Mouse-ear cress).